We begin with the raw amino-acid sequence, 461 residues long: D-phenylhydantoinase (461 aa).

The a divalent metal cation site is built by histidine 59, histidine 61, and lysine 151. Residue lysine 151 is modified to N6-carboxylysine. Position 156 (tyrosine 156) interacts with substrate. Residues histidine 182 and histidine 239 each contribute to the a divalent metal cation site. Serine 286 serves as a coordination point for substrate. Aspartate 313 is an a divalent metal cation binding site. Asparagine 335 contributes to the substrate binding site.

Belongs to the metallo-dependent hydrolases superfamily. Hydantoinase/dihydropyrimidinase family. As to quaternary structure, homotetramer. It depends on a divalent metal cation as a cofactor. In terms of processing, carboxylation allows a single lysine to coordinate two divalent metal cations.

The catalysed reaction is D-5-phenylhydantoin + H2O = N-carbamoyl-D-phenylglycine + H(+). Catalyzes the stereospecific hydrolysis of the cyclic amide bond of D-hydantoin derivatives with an aromatic side chains at the 5'-position. Has no activity on dihydropyrimidines. The physiological function is unknown. In Shigella boydii serotype 4 (strain Sb227), this protein is D-phenylhydantoinase.